Reading from the N-terminus, the 21-residue chain is Venom nerve growth factor Bco12 (21 aa).

It belongs to the NGF-beta family. Homodimer; non-covalently linked. Glycosylated. Expressed by the venom gland.

It localises to the secreted. Nerve growth factor is important for the development and maintenance of the sympathetic and sensory nervous systems. It stimulates division and differentiation of sympathetic and embryonic sensory neurons as well as basal forebrain cholinergic neurons in the brain. Its relevance in the snake venom is not clear. However, it has been shown to inhibit metalloproteinase-dependent proteolysis of platelet glycoprotein Ib alpha, suggesting a metalloproteinase inhibition to prevent metalloprotease autodigestion and/or protection against prey proteases. Binds a lipid between the two protein chains in the homodimer. The lipid-bound form promotes histamine relase from mouse mast cells, contrary to the lipid-free form. This Bothrops cotiara (Cotiara) protein is Venom nerve growth factor Bco12.